An 891-amino-acid chain; its full sequence is Extended synaptotagmin-3 (891 aa).

The interval 1–30 (MQPEEPCAPSAPGGPDVPERGQRSRDPGPR) is disordered. The Cytoplasmic portion of the chain corresponds to 1–32 (MQPEEPCAPSAPGGPDVPERGQRSRDPGPRLS). The span at 17-28 (VPERGQRSRDPG) shows a compositional bias: basic and acidic residues. A helical transmembrane segment spans residues 33-53 (GQLLPELYSFVARVLFYLAPV). Residue tyrosine 54 is a topological domain, lumenal. Residues 55-75 (LAGYLGLSVTWLLLGALLWMW) form a helical membrane-spanning segment. Residues 76 to 891 (WRRNRRGKLG…ELTADGQPRS (816 aa)) lie on the Cytoplasmic side of the membrane. The SMP-LTD domain maps to 118–295 (DVERVEWANK…LPNRVTVPVK (178 aa)). 2 consecutive C2 domains span residues 292–412 (VPVK…DEWF) and 430–570 (SLLT…QLDH). Ca(2+) is bound by residues lysine 325, aspartate 326, aspartate 336, aspartate 383, glutamate 384, aspartate 385, aspartate 387, aspartate 389, and aspartate 390. Positions 652-711 (SAATTDPEPMPEPQGPGPEPKGKDSARGLCESPGKKKNPATTFLTVPGLHSPGPIKSPRP) are disordered. A compositionally biased stretch (pro residues) spans 659–670 (EPMPEPQGPGPE). In terms of domain architecture, C2 3 spans 759 to 881 (RLGEIQLTVR…DLIKGFSQWY (123 aa)). A required for phosphatidylinositol 4,5-bisphosphate-dependent location at the cell membrane region spans residues 806–813 (RRWASRKK).

Belongs to the extended synaptotagmin family.

It is found in the cell membrane. The protein localises to the endoplasmic reticulum membrane. Functionally, tethers the endoplasmic reticulum to the cell membrane and promotes the formation of appositions between the endoplasmic reticulum and the cell membrane. Binds glycerophospholipids in a barrel-like domain and may play a role in cellular lipid transport. The polypeptide is Extended synaptotagmin-3 (Esyt3) (Mus musculus (Mouse)).